Reading from the N-terminus, the 71-residue chain is Protein DP71L (71 aa).

Important for host CHOP inhibition regions lie at residues Val-16–Phe-18 and Leu-57–Leu-61.

The protein belongs to the asfivirus DP71L family. Interacts (via C-terminus) with host PPP1CB.

In terms of biological role, interacts with the host phosphatase PP1 catalytic subunit (PPP1CB) and recruits it to dephosphorylate EIF2S1/eIF2alpha and therefore restores the host translation that has been shut-down by the host. Also inhibits the EIF2S1/eIF2alpha-ATF4-DDIT3/CHOP pathway. The polypeptide is Protein DP71L (Ornithodoros (relapsing fever ticks)).